Reading from the N-terminus, the 369-residue chain is Ferredoxin--NADP reductase 2 (369 aa).

Positions 1–23 are disordered; it reads MDLSIPNPVADTTKQVDGGSPAG. Residues aspartate 58, glutamine 66, tyrosine 71, valine 111, phenylalanine 146, aspartate 311, and threonine 352 each coordinate FAD.

Belongs to the ferredoxin--NADP reductase type 2 family. In terms of assembly, homodimer. FAD is required as a cofactor.

It catalyses the reaction 2 reduced [2Fe-2S]-[ferredoxin] + NADP(+) + H(+) = 2 oxidized [2Fe-2S]-[ferredoxin] + NADPH. In Cupriavidus necator (strain ATCC 17699 / DSM 428 / KCTC 22496 / NCIMB 10442 / H16 / Stanier 337) (Ralstonia eutropha), this protein is Ferredoxin--NADP reductase 2.